A 505-amino-acid chain; its full sequence is L-carnitine/gamma-butyrobetaine antiporter (505 aa).

12 helical membrane-spanning segments follow: residues 10–30, 51–71, 92–112, 143–163, 195–215, 231–251, 263–283, 316–336, 347–367, 403–423, 446–466, and 475–495; these read IEPK…WLTV, WGWA…WLVF, IFMM…SIEI, GPLP…FFFV, FYLV…TPLV, LDAI…ACGL, SYLS…SFIM, WTVF…IFLA, LCFG…TVLG, LSTA…VTLI, LLVR…LLAL, and AIIA…LSFI.

This sequence belongs to the BCCT transporter (TC 2.A.15) family. CaiT subfamily. In terms of assembly, homotrimer.

The protein localises to the cell inner membrane. It catalyses the reaction 4-(trimethylamino)butanoate(in) + (R)-carnitine(out) = 4-(trimethylamino)butanoate(out) + (R)-carnitine(in). The protein operates within amine and polyamine metabolism; carnitine metabolism. Its function is as follows. Catalyzes the exchange of L-carnitine for gamma-butyrobetaine. The chain is L-carnitine/gamma-butyrobetaine antiporter from Salmonella typhi.